The sequence spans 99 residues: Large ribosomal subunit protein eL30 (99 aa).

The protein belongs to the eukaryotic ribosomal protein eL30 family. In terms of assembly, part of the 50S ribosomal subunit.

The chain is Large ribosomal subunit protein eL30 from Pyrococcus furiosus (strain ATCC 43587 / DSM 3638 / JCM 8422 / Vc1).